Reading from the N-terminus, the 387-residue chain is 3-ketoacyl-CoA thiolase (387 aa).

C91 functions as the Acyl-thioester intermediate in the catalytic mechanism. Catalysis depends on proton acceptor residues H343 and C373.

The protein belongs to the thiolase-like superfamily. Thiolase family. In terms of assembly, heterotetramer of two alpha chains (FadB) and two beta chains (FadA).

It localises to the cytoplasm. The catalysed reaction is an acyl-CoA + acetyl-CoA = a 3-oxoacyl-CoA + CoA. The protein operates within lipid metabolism; fatty acid beta-oxidation. In terms of biological role, catalyzes the final step of fatty acid oxidation in which acetyl-CoA is released and the CoA ester of a fatty acid two carbons shorter is formed. This is 3-ketoacyl-CoA thiolase from Escherichia coli O139:H28 (strain E24377A / ETEC).